Here is a 530-residue protein sequence, read N- to C-terminus: Ubiquitin carboxyl-terminal hydrolase 17-like protein 17 (530 aa).

Residues 80–375 enclose the USP domain; sequence AGLQNMGNTC…QAYVLFYIQK (296 aa). Cys89 acts as the Nucleophile in catalysis. The active-site Proton acceptor is His334. 2 stretches are compositionally biased toward basic and acidic residues: residues 382 to 392 and 398 to 411; these read SESVSRGREPR and DTDRRATQGELKRD. 2 disordered regions span residues 382–411 and 477–530; these read SESVSRGREPRALGAEDTDRRATQGELKRD and NHHP…LVCQ. Residues 493–505 show a composition bias toward polar residues; sequence TPTHQESMNTGTL. Residues 510-524 show a composition bias toward basic residues; that stretch reads GRARRSKGKNKHSKR.

It belongs to the peptidase C19 family. USP17 subfamily.

Its subcellular location is the nucleus. It is found in the endoplasmic reticulum. The catalysed reaction is Thiol-dependent hydrolysis of ester, thioester, amide, peptide and isopeptide bonds formed by the C-terminal Gly of ubiquitin (a 76-residue protein attached to proteins as an intracellular targeting signal).. Its function is as follows. Deubiquitinating enzyme that removes conjugated ubiquitin from specific proteins to regulate different cellular processes that may include cell proliferation, progression through the cell cycle, apoptosis, cell migration, and the cellular response to viral infection. In Homo sapiens (Human), this protein is Ubiquitin carboxyl-terminal hydrolase 17-like protein 17 (USP17L17).